The following is a 707-amino-acid chain: Elongation factor G (707 aa).

The tr-type G domain maps to 9–293 (HDVRNIGIMA…GVVDYLPSPE (285 aa)). GTP-binding positions include 18 to 25 (AHIDAGKT), 90 to 94 (DTPGH), and 144 to 147 (NKMD).

The protein belongs to the TRAFAC class translation factor GTPase superfamily. Classic translation factor GTPase family. EF-G/EF-2 subfamily.

It is found in the cytoplasm. Its function is as follows. Catalyzes the GTP-dependent ribosomal translocation step during translation elongation. During this step, the ribosome changes from the pre-translocational (PRE) to the post-translocational (POST) state as the newly formed A-site-bound peptidyl-tRNA and P-site-bound deacylated tRNA move to the P and E sites, respectively. Catalyzes the coordinated movement of the two tRNA molecules, the mRNA and conformational changes in the ribosome. The sequence is that of Elongation factor G from Bifidobacterium longum (strain DJO10A).